The primary structure comprises 175 residues: RNA pyrophosphohydrolase (175 aa).

In terms of domain architecture, Nudix hydrolase spans 6–149; that stretch reads GYRPNVGIVI…KRDVYRRVMK (144 aa). The Nudix box motif lies at 38–59; the sequence is GGINPGETPEQAMYRELFEEVG.

This sequence belongs to the Nudix hydrolase family. RppH subfamily. The cofactor is a divalent metal cation.

Accelerates the degradation of transcripts by removing pyrophosphate from the 5'-end of triphosphorylated RNA, leading to a more labile monophosphorylated state that can stimulate subsequent ribonuclease cleavage. The sequence is that of RNA pyrophosphohydrolase from Yersinia pseudotuberculosis serotype O:1b (strain IP 31758).